The primary structure comprises 172 residues: NAD(P)H-quinone oxidoreductase subunit J (172 aa).

This sequence belongs to the complex I 30 kDa subunit family. NDH-1 can be composed of about 15 different subunits; different subcomplexes with different compositions have been identified which probably have different functions.

Its subcellular location is the cellular thylakoid membrane. It catalyses the reaction a plastoquinone + NADH + (n+1) H(+)(in) = a plastoquinol + NAD(+) + n H(+)(out). The enzyme catalyses a plastoquinone + NADPH + (n+1) H(+)(in) = a plastoquinol + NADP(+) + n H(+)(out). Functionally, NDH-1 shuttles electrons from an unknown electron donor, via FMN and iron-sulfur (Fe-S) centers, to quinones in the respiratory and/or the photosynthetic chain. The immediate electron acceptor for the enzyme in this species is believed to be plastoquinone. Couples the redox reaction to proton translocation, and thus conserves the redox energy in a proton gradient. Cyanobacterial NDH-1 also plays a role in inorganic carbon-concentration. In Synechococcus sp. (strain ATCC 27144 / PCC 6301 / SAUG 1402/1) (Anacystis nidulans), this protein is NAD(P)H-quinone oxidoreductase subunit J.